The chain runs to 153 residues: 3-hydroxyacyl-[acyl-carrier-protein] dehydratase FabZ (153 aa).

The active site involves histidine 57.

The protein belongs to the thioester dehydratase family. FabZ subfamily.

It localises to the cytoplasm. It catalyses the reaction a (3R)-hydroxyacyl-[ACP] = a (2E)-enoyl-[ACP] + H2O. Functionally, involved in unsaturated fatty acids biosynthesis. Catalyzes the dehydration of short chain beta-hydroxyacyl-ACPs and long chain saturated and unsaturated beta-hydroxyacyl-ACPs. The chain is 3-hydroxyacyl-[acyl-carrier-protein] dehydratase FabZ from Aeromonas salmonicida (strain A449).